The following is a 350-amino-acid chain: Heat-inducible transcription repressor HrcA (350 aa).

The protein belongs to the HrcA family.

In terms of biological role, negative regulator of class I heat shock genes (grpE-dnaK-dnaJ and groELS operons). Prevents heat-shock induction of these operons. The protein is Heat-inducible transcription repressor HrcA of Methylococcus capsulatus (strain ATCC 33009 / NCIMB 11132 / Bath).